Consider the following 343-residue polypeptide: Flap endonuclease 1 (343 aa).

Residues 1–98 (MGVPIGDLVP…KELEKRREAR (98 aa)) are N-domain. Mg(2+) contacts are provided by D27, D80, E152, E154, D173, D175, and D236. Residues 116–258 (EARKYAQRAT…KALEIVRYSR (143 aa)) form an I-domain region. The interval 330–338 (RQSTLESWF) is interaction with PCNA.

It belongs to the XPG/RAD2 endonuclease family. FEN1 subfamily. In terms of assembly, interacts with PCNA. PCNA stimulates the nuclease activity without altering cleavage specificity. The cofactor is Mg(2+).

Its function is as follows. Structure-specific nuclease with 5'-flap endonuclease and 5'-3' exonuclease activities involved in DNA replication and repair. During DNA replication, cleaves the 5'-overhanging flap structure that is generated by displacement synthesis when DNA polymerase encounters the 5'-end of a downstream Okazaki fragment. Binds the unpaired 3'-DNA end and kinks the DNA to facilitate 5' cleavage specificity. Cleaves one nucleotide into the double-stranded DNA from the junction in flap DNA, leaving a nick for ligation. Also involved in the base excision repair (BER) pathway. Acts as a genome stabilization factor that prevents flaps from equilibrating into structures that lead to duplications and deletions. Also possesses 5'-3' exonuclease activity on nicked or gapped double-stranded DNA. The polypeptide is Flap endonuclease 1 (Pyrococcus horikoshii (strain ATCC 700860 / DSM 12428 / JCM 9974 / NBRC 100139 / OT-3)).